The following is an 838-amino-acid chain: G-protein coupled receptor-associated sorting protein 2 (838 aa).

Disordered stretches follow at residues 1–121 (MTGA…PGAR), 218–293 (ASNE…NPFS), and 531–552 (LELS…PSPE). Residues 13–31 (KPEKKAGEEVVAGPEREND) show a composition bias toward basic and acidic residues. The segment covering 220–235 (NESGFWSADETSTASS) has biased composition (polar residues). Basic residues predominate over residues 255–271 (RSRHRAKHQTNPRSRPR). Phosphoserine is present on residues serine 282 and serine 284. Positions 542 to 552 (SLLQPDQPSPE) are enriched in polar residues.

It belongs to the GPRASP family. In terms of assembly, interacts with cytoplasmic tails of a variety of G protein-coupled receptors such as muscarinic acetylcholine receptor M1/CHRM1 and calcitonin receptor/CALCR.

May play a role in regulation of a variety of G-protein coupled receptors. The chain is G-protein coupled receptor-associated sorting protein 2 (GPRASP2) from Pongo abelii (Sumatran orangutan).